The following is a 352-amino-acid chain: MVFRIASSPYTHNQRQTSRIMLLVLLAAVPGIAAQLWFFGWGTLVQILLASVSALLAEALVLKLRKQSVAATLKDNSALLTGLLLAVSIPPLAPWWMVVLGTVFAVIIAKQLYGGLGQNPFNPAMIGYVVLLISFPVQMTSWLPPHEIAVNIPGFIDTIQVIFSGHTASGGDMNTLRLGIDGISQATPLDTFKTSVRAGHSVEEIMQYPIYSGILAGAGWQWVNLAWLAGGVWLLWQKAIRWHIPLSFLVTLALCATLGWLFSPDTLAAPQIHLLSGATMLGAFFILTDPVTASTTNRGRLIFGALAGLLVWLIRSFGGYPDGVAFAVLLANITVPLIDYYTRPRVYGHRKG.

Transmembrane regions (helical) follow at residues 20 to 40, 42 to 62, 89 to 109, and 123 to 143; these read IMLL…WFFG, GTLV…ALVL, IPPL…VIIA, and PAMI…TSWL. Threonine 187 bears the FMN phosphoryl threonine mark. Transmembrane regions (helical) follow at residues 214 to 234, 242 to 262, 267 to 287, 301 to 321, and 322 to 342; these read ILAG…GVWL, WHIP…GWLF, LAAP…FFIL, LIFG…GGYP, and DGVA…DYYT.

It belongs to the NqrB/RnfD family. As to quaternary structure, the complex is composed of six subunits: RsxA, RsxB, RsxC, RsxD, RsxE and RsxG. The cofactor is FMN.

It is found in the cell inner membrane. Its function is as follows. Part of a membrane-bound complex that couples electron transfer with translocation of ions across the membrane. Required to maintain the reduced state of SoxR. The polypeptide is Ion-translocating oxidoreductase complex subunit D (Escherichia coli O127:H6 (strain E2348/69 / EPEC)).